A 695-amino-acid polypeptide reads, in one-letter code: Elongation factor G (695 aa).

The tr-type G domain maps to 5–280; the sequence is SHYRNIGIFA…AVIDFLPSPT (276 aa). GTP is bound by residues 14 to 21, 78 to 82, and 132 to 135; these read AHVDAGKT, DTPGH, and NKLD. Positions 279-299 are disordered; that stretch reads PTEVDPQPLTDEETGEPTGEV.

It belongs to the TRAFAC class translation factor GTPase superfamily. Classic translation factor GTPase family. EF-G/EF-2 subfamily.

The protein resides in the cytoplasm. In terms of biological role, catalyzes the GTP-dependent ribosomal translocation step during translation elongation. During this step, the ribosome changes from the pre-translocational (PRE) to the post-translocational (POST) state as the newly formed A-site-bound peptidyl-tRNA and P-site-bound deacylated tRNA move to the P and E sites, respectively. Catalyzes the coordinated movement of the two tRNA molecules, the mRNA and conformational changes in the ribosome. The chain is Elongation factor G from Alteromonas mediterranea (strain DSM 17117 / CIP 110805 / LMG 28347 / Deep ecotype).